The sequence spans 558 residues: Formate--tetrahydrofolate ligase (558 aa).

66-73 (TPAGEGKT) contributes to the ATP binding site.

The protein belongs to the formate--tetrahydrofolate ligase family.

It carries out the reaction (6S)-5,6,7,8-tetrahydrofolate + formate + ATP = (6R)-10-formyltetrahydrofolate + ADP + phosphate. The protein operates within one-carbon metabolism; tetrahydrofolate interconversion. This Neisseria gonorrhoeae (strain NCCP11945) protein is Formate--tetrahydrofolate ligase.